We begin with the raw amino-acid sequence, 681 residues long: DNA ligase (681 aa).

Residues 45–49, 94–95, and Glu-120 contribute to the NAD(+) site; these read DFDFD and SL. Lys-122 acts as the N6-AMP-lysine intermediate in catalysis. NAD(+) is bound by residues Arg-143, Glu-177, Lys-289, and Lys-313. 4 residues coordinate Zn(2+): Cys-403, Cys-406, Cys-421, and Cys-426. Residues 593-681 enclose the BRCT domain; sequence SDQQPFAGQS…SLKINFKNTI (89 aa).

Belongs to the NAD-dependent DNA ligase family. LigA subfamily. The cofactor is Mg(2+). Mn(2+) serves as cofactor.

The enzyme catalyses NAD(+) + (deoxyribonucleotide)n-3'-hydroxyl + 5'-phospho-(deoxyribonucleotide)m = (deoxyribonucleotide)n+m + AMP + beta-nicotinamide D-nucleotide.. Functionally, DNA ligase that catalyzes the formation of phosphodiester linkages between 5'-phosphoryl and 3'-hydroxyl groups in double-stranded DNA using NAD as a coenzyme and as the energy source for the reaction. It is essential for DNA replication and repair of damaged DNA. The chain is DNA ligase from Leptospira borgpetersenii serovar Hardjo-bovis (strain JB197).